An 86-amino-acid polypeptide reads, in one-letter code: Toxin Aam2 (86 aa).

Residues 1-20 (MNYLITISLALLLMTGVASG) form the signal peptide. An LCN-type CS-alpha/beta domain is found at 22-84 (RDGYIADAGN…VPIKVPGKCN (63 aa)). 4 cysteine pairs are disulfide-bonded: cysteine 32–cysteine 83, cysteine 36–cysteine 56, cysteine 42–cysteine 66, and cysteine 46–cysteine 68. The residue at position 84 (asparagine 84) is an Asparagine amide.

Belongs to the long (4 C-C) scorpion toxin superfamily. Sodium channel inhibitor family. Alpha subfamily. Expressed by the venom gland.

Its subcellular location is the secreted. Its function is as follows. Alpha toxins bind voltage-independently at site-3 of sodium channels (Nav) and inhibit the inactivation of the activated channels, thereby blocking neuronal transmission. This chain is Toxin Aam2, found in Androctonus amoreuxi (African fattail scorpion).